Here is a 195-residue protein sequence, read N- to C-terminus: Ferredoxin-2, mitochondrial (195 aa).

A mitochondrion-targeting transit peptide spans 1 to 61 (MAAAAAVRAG…RRLRTSIGVC (61 aa)). A 2Fe-2S ferredoxin-type domain is found at 81-182 (NVVYIDRSGR…GMELTLPKVT (102 aa)). [2Fe-2S] cluster contacts are provided by Cys-117, Cys-123, Cys-126, and Cys-163.

Belongs to the adrenodoxin/putidaredoxin family. In terms of assembly, component of the mitochondrial core iron-sulfur cluster (ISC) complex composed of NFS1, LYRM4, NDUFAB1, ISCU, FXN, and FDX2; this complex is a heterohexamer containing two copies of each monomer. Form a heterodimer complex with NFS1. Requires [2Fe-2S] cluster as cofactor.

The protein resides in the mitochondrion. It is found in the mitochondrion matrix. Its function is as follows. Electron donor, of the core iron-sulfur cluster (ISC) assembly complex, that acts to reduce the persulfide into sulfide during [2Fe-2S] clusters assembly on the scaffolding protein ISCU. The core iron-sulfur cluster (ISC) assembly complex is involved in the de novo synthesis of a [2Fe-2S] cluster, the first step of the mitochondrial iron-sulfur protein biogenesis. This process is initiated by the cysteine desulfurase complex (NFS1:LYRM4:NDUFAB1) that produces persulfide which is delivered on the scaffold protein ISCU in a FXN-dependent manner. Then this complex is stabilized by FDX2 which provides reducing equivalents to accomplish the [2Fe-2S] cluster assembly. Finally, the [2Fe-2S] cluster is transferred from ISCU to chaperone proteins, including HSCB, HSPA9 and GLRX5. Essential for coenzyme Q biosynthesis: together with FDXR, transfers the electrons required for the hydroxylation reaction performed by COQ6. The chain is Ferredoxin-2, mitochondrial from Danio rerio (Zebrafish).